The sequence spans 162 residues: Nucleotide-binding protein Mpe_A3039 (162 aa).

This sequence belongs to the YajQ family.

Nucleotide-binding protein. This is Nucleotide-binding protein Mpe_A3039 from Methylibium petroleiphilum (strain ATCC BAA-1232 / LMG 22953 / PM1).